A 408-amino-acid polypeptide reads, in one-letter code: MDLAGLLLDEEGTFSLSGFQDFTFLPGHQKLSARIRRRLYYGWDLETDCSLEELSSPVADITVELLQKAAPSPIRRLQKKYVAHVSREACISPCAMMLALVYIERLRHRNPDYLQHVSSSDLFLISMMVASKYLYDEGEEEEVFNDEWGAAGGVAVPTLNALERSFLSAMDWRLYTDPREIFEVLSWLESCVAEQQGRRRGWYTYTDLCVLLEQPMWQLSLGSLCQRLVKLSCLLAVAYVSSVALAVASMAVIHQSLGLSSSPSPSPPELTLVPKNLLQPCIPAPVPQCLTNVSSCLEDSVELPSLWGSLLDPLTPPLMPPPDPPAPPTPFHKCPFCQKFQRNPPNCRACHQPNRTVSIGPIHPFYHTHGLAPPWLWSPVAPPFLQPQQCSLFSVMKLARLTSVIFPG.

The helical transmembrane segment at 233–253 threads the bilayer; that stretch reads CLLAVAYVSSVALAVASMAVI.

Belongs to the CNPPD1 family.

The protein resides in the membrane. In Rattus norvegicus (Rat), this protein is Protein CNPPD1 (Cnppd1).